The following is a 421-amino-acid chain: Histidine--tRNA ligase (421 aa).

This sequence belongs to the class-II aminoacyl-tRNA synthetase family. In terms of assembly, homodimer.

It is found in the cytoplasm. It carries out the reaction tRNA(His) + L-histidine + ATP = L-histidyl-tRNA(His) + AMP + diphosphate + H(+). The protein is Histidine--tRNA ligase of Thermus thermophilus (strain ATCC BAA-163 / DSM 7039 / HB27).